Here is a 212-residue protein sequence, read N- to C-terminus: Thymidylate kinase (212 aa).

10-17 (GIDGCGKT) contacts ATP.

Belongs to the thymidylate kinase family.

The enzyme catalyses dTMP + ATP = dTDP + ADP. Functionally, phosphorylation of dTMP to form dTDP in both de novo and salvage pathways of dTTP synthesis. In Synechococcus sp. (strain RCC307), this protein is Thymidylate kinase.